Here is a 455-residue protein sequence, read N- to C-terminus: Mu-like prophage FluMu DNA circularization protein (455 aa).

The H-T-H motif DNA-binding region spans 368–387 (VILDNADAEQWTSYAALEQY).

The protein to phage Mu protein N.

In Haemophilus influenzae (strain ATCC 51907 / DSM 11121 / KW20 / Rd), this protein is Mu-like prophage FluMu DNA circularization protein.